Here is a 538-residue protein sequence, read N- to C-terminus: Syncytin-2 (538 aa).

Positions 1–15 (MGLLLLVLILTPLLA) are cleaved as a signal peptide. The Extracellular portion of the chain corresponds to 16–478 (AHRHPDFPLL…GWLNWEGTWK (463 aa)). A CXXC motif is present at residues 43 to 46 (CWLC). Disulfide bonds link cysteine 43/cysteine 46, cysteine 43/cysteine 439, and cysteine 431/cysteine 438. Asparagine 133, asparagine 146, asparagine 177, asparagine 220, asparagine 241, asparagine 247, asparagine 312, and asparagine 332 each carry an N-linked (GlcNAc...) asparagine glycan. The fusion peptide stretch occupies residues 354-374 (FIPLLAGLGIIAGTGTGIAGI). The short motif at 414-430 (LQNRRGLDMLTAAQGGI) is the CKS-17 element. Positions 431-439 (CLALDEKCC) match the CX6CC motif. A glycan (N-linked (GlcNAc...) asparagine) is linked at asparagine 443. A helical transmembrane segment spans residues 479–499 (WFSWVLPFTGPLVSLLLLLLF). The Cytoplasmic portion of the chain corresponds to 500 to 538 (GPCLLNLITQFVLSRLQAIKLQTNLSAGCRPHNIQESPF).

It belongs to the gamma type-C retroviral envelope protein family. HERV class-I FRD env subfamily. The surface and transmembrane proteins form a heterodimer. They are attached by non-covalent interactions or by a labile interchain disulfide bond. Post-translationally, specific enzymatic cleavages in vivo yield the mature SU and TM proteins. The CXXC motif is highly conserved across a broad range of retroviral envelope proteins. It is thought to participate in the formation of a labile disulfide bond possibly with the CX6CC motif present in the transmembrane protein.

The protein localises to the virion. The protein resides in the cell membrane. Functionally, this endogenous retroviral envelope protein has retained its original fusogenic properties and participates in trophoblast fusion and the formation of a syncytium during placenta morphogenesis. The interaction with MFSD2A is apparently important for this process. In terms of biological role, endogenous envelope proteins may have kept, lost or modified their original function during evolution but this one can still make pseudotypes with MLV, HIV-1 or SIV-1 virions and confer infectivity. Retroviral envelope proteins mediate receptor recognition and membrane fusion during early infection. The surface protein mediates receptor recognition, while the transmembrane protein anchors the envelope heterodimer to the viral membrane through one transmembrane domain. The other hydrophobic domain, called fusion peptide, mediates fusion of the viral membrane with the target cell membrane. The chain is Syncytin-2 (ERVFRD-1) from Pongo pygmaeus (Bornean orangutan).